The chain runs to 162 residues: CASP-like protein 1C1 (162 aa).

Over 1–7 the chain is Cytoplasmic; it reads MAKLHRL. A helical membrane pass occupies residues 8–28; that stretch reads ISAVLRLAAAGAAAAAAIIMV. The Extracellular portion of the chain corresponds to 29-50; sequence TSHETTSFFGIEMEAKYSYTPS. Residues 51–71 form a helical membrane-spanning segment; sequence FVFFVVAFAVAFAYSLLALLA. Topologically, residues 72–79 are cytoplasmic; that stretch reads RPGSTASR. The chain crosses the membrane as a helical span at residues 80–100; that stretch reads LLLLSDVMVGMLLTGAVAATG. Topologically, residues 101 to 128 are extracellular; that stretch reads AISQVGKSGNEHAGWLPICAQVQAYCSH. A helical membrane pass occupies residues 129-149; sequence VMGALIAGFVSLLLYFLIIMY. Residues 150-162 are Cytoplasmic-facing; that stretch reads SLHAVAEPLCSCH.

The protein belongs to the Casparian strip membrane proteins (CASP) family. As to quaternary structure, homodimer and heterodimers.

It localises to the cell membrane. The protein is CASP-like protein 1C1 of Sorghum bicolor (Sorghum).